The following is a 1177-amino-acid chain: MDNIQTFIKESDDFKSIINGLHEGLKEQLLAGLSGSARSVFTSALANETNKPIFLITHNLYQAQKVTDDLTSLLEDRSVLLYPVNELISSEIAVASPELRAQRLDVINRLTNGEAPIVVAPVAAIRRMLPPVEVWKSSQMLIQVGHDIEPDQLASRLVEVGYERSDMVSAPGEFSIRGGIIDIYPLTSENPVRIELFDTEVDSIRSFNSDDQRSIETLTSINIGPAKELIIRPEEKARAMEKIDSGLAASLKKLKADKQKEILHANISHDKERLSEGQTDQELVKYLSYFYEKPASLLDYTPDNTLLILDEVSRIHEMEEQLQKEEAEFITNLLEEGKILHDIRLSFSFQKIVAEQKRPLLYYSLFLRHVHHTSPQNIVNVSGRQMQSFHGQMNVLAGEMERFKKSNFTVVFLGANKERTQKLSSVLADYDIEAAMTDSKKALVQGQVYIMEGELQSGFELPLMKLAVITEEELFKNRVKKKPRKQKLTNAERIKSYSELQIGDYVVHINHGIGKYLGIETLEINGIHKDYLNIHYQGSDKLYVPVEQIDQVQKYVGSEGKEPKLYKLGGSEWKRVKKKVETSVQDIADDLIKLYAEREASKGYAFSPDHEMQREFESAFPYQETEDQLRSIHEIKKDMERERPMDRLLCGDVGYGKTEVAIRAAFKAIGDGKQVALLVPTTILAQQHYETIKERFQDYPINIGLLSRFRTRKEANETIKGLKNGTVDIVIGTHRLLSKDVVYKDLGLLIIDEEQRFGVTHKEKIKQIKANVDVLTLTATPIPRTLHMSMLGVRDLSVIETPPENRFPVQTYVVEYNGALVREAIERELARGGQVYFLYNRVEDIERKADEISMLVPDAKVAYAHGKMTENELETVMLSFLEGESDVLVSTTIIETGVDIPNVNTLIVFDADKMGLSQLYQLRGRVGRSNRVAYAYFTYRRDKVLTEVAEKRLQAIKEFTELGSGFKIAMRDLTIRGAGNLLGAQQHGFIDSVGFDLYSQMLKEAIEERKGDTAKTEQFETEIDVELDAYIPETYIQDGKQKIDMYKRFRSVATIEEKNELQDEMIDRFGNYPKEVEYLFTVAEMKVYARQERVELIKQDKDAVRLTISEEASAEIDGQKLFELGNQYGRQIGLGMEGKKLKISIQTKGRSADEWLDTVLGMLKGLKDVKKQTISST.

In terms of domain architecture, Helicase ATP-binding spans 638–799 (DMERERPMDR…MLGVRDLSVI (162 aa)). 651–658 (GDVGYGKT) provides a ligand contact to ATP. The DEEQ box signature appears at 752–755 (DEEQ). Residues 820-974 (LVREAIEREL…GFKIAMRDLT (155 aa)) enclose the Helicase C-terminal domain.

It in the N-terminal section; belongs to the UvrB family. This sequence in the C-terminal section; belongs to the helicase family. RecG subfamily.

Its subcellular location is the cytoplasm. Its function is as follows. Couples transcription and DNA repair by recognizing RNA polymerase (RNAP) stalled at DNA lesions. Mediates ATP-dependent release of RNAP and its truncated transcript from the DNA, and recruitment of nucleotide excision repair machinery to the damaged site. Probably required to repair non-bulky DNA lesions. The polypeptide is Transcription-repair-coupling factor (Bacillus subtilis (strain 168)).